Reading from the N-terminus, the 564-residue chain is Quinone-dependent D-lactate dehydrogenase (564 aa).

The FAD-binding PCMH-type domain occupies 36 to 207 (GTGNALAVVR…TNLQEKRYQV (172 aa)). FAD contacts are provided by residues 70-74 (AANTG), 78-79 (GS), Gly137, Ser144, Gly154, and Val256.

It belongs to the quinone-dependent D-lactate dehydrogenase family. Requires FAD as cofactor.

The protein resides in the cell inner membrane. It catalyses the reaction (R)-lactate + a quinone = a quinol + pyruvate. Its function is as follows. Catalyzes the oxidation of D-lactate to pyruvate. The polypeptide is Quinone-dependent D-lactate dehydrogenase (Haemophilus influenzae (strain ATCC 51907 / DSM 11121 / KW20 / Rd)).